Here is a 269-residue protein sequence, read N- to C-terminus: MAHDREVLRMIWEGQIGICFQADRDEIVGIKPEPFYLMISRLSYLPLVTDKVRKYFSRYISAEHQDGAVWFDFNGTPLRLHYPIGVLYDLLHPEEDSTPWCLTIHFSKFPEDMLVKLNSKELLESHYMSCLKEADVLKHRGLVISAMQKKDHNQLWLGLVNEKFDQFWAVNRRLMEPYGDLESFKNIPLRIYTDDDFTYTQKLISPISVGGQKKSLADLMAELSTPVRRAVGCRTHGIDLHEETQLQWMSEHLSYPDNFLHLSVDYKDV.

A Glycyl lysine isopeptide (Lys-Gly) (interchain with G-Cter in ATG12) cross-link involves residue K132.

The protein belongs to the ATG5 family. Conjugated to Atg12, which is essential for autophagy.

The protein localises to the cytoplasm. It localises to the preautophagosomal structure membrane. In terms of biological role, involved in autophagic vesicle formation. Conjugation with Atg12, through a ubiquitin-like conjugating system involving Atg7 as an E1-like activating enzyme and Atg10 as an E2-like conjugating enzyme, is essential for its function. The Atg12-Atg5 conjugate acts as an E3-like enzyme which is required for lipidation of Atg8 and its association to the vesicle membranes. This chain is Autophagy protein 5 (Atg5), found in Drosophila melanogaster (Fruit fly).